Reading from the N-terminus, the 504-residue chain is SPbeta prophage-derived uncharacterized protein YorI (504 aa).

In Bacillus subtilis (strain 168), this protein is SPbeta prophage-derived uncharacterized protein YorI (yorI).